The sequence spans 241 residues: Phosphoribosylaminoimidazole-succinocarboxamide synthase (241 aa).

Belongs to the SAICAR synthetase family.

It carries out the reaction 5-amino-1-(5-phospho-D-ribosyl)imidazole-4-carboxylate + L-aspartate + ATP = (2S)-2-[5-amino-1-(5-phospho-beta-D-ribosyl)imidazole-4-carboxamido]succinate + ADP + phosphate + 2 H(+). Its pathway is purine metabolism; IMP biosynthesis via de novo pathway; 5-amino-1-(5-phospho-D-ribosyl)imidazole-4-carboxamide from 5-amino-1-(5-phospho-D-ribosyl)imidazole-4-carboxylate: step 1/2. This is Phosphoribosylaminoimidazole-succinocarboxamide synthase from Lacticaseibacillus casei (strain BL23) (Lactobacillus casei).